The following is a 263-amino-acid chain: Phosphatidylglycerol--prolipoprotein diacylglyceryl transferase (263 aa).

A run of 4 helical transmembrane segments spans residues 6 to 26 (VIFS…VLGI), 50 to 70 (LLTA…VLIY), 85 to 105 (TWEG…AVII), and 112 to 132 (IPTF…LFLG). Arg-133 contacts a 1,2-diacyl-sn-glycero-3-phospho-(1'-sn-glycerol). Transmembrane regions (helical) follow at residues 169–189 (LYEA…LFFL), 197–217 (GALT…VEFF), and 233–253 (MGQL…LGAL).

The protein belongs to the Lgt family.

The protein resides in the cell membrane. The catalysed reaction is L-cysteinyl-[prolipoprotein] + a 1,2-diacyl-sn-glycero-3-phospho-(1'-sn-glycerol) = an S-1,2-diacyl-sn-glyceryl-L-cysteinyl-[prolipoprotein] + sn-glycerol 1-phosphate + H(+). It functions in the pathway protein modification; lipoprotein biosynthesis (diacylglyceryl transfer). Catalyzes the transfer of the diacylglyceryl group from phosphatidylglycerol to the sulfhydryl group of the N-terminal cysteine of a prolipoprotein, the first step in the formation of mature lipoproteins. This Wolbachia pipientis wMel protein is Phosphatidylglycerol--prolipoprotein diacylglyceryl transferase.